Reading from the N-terminus, the 1080-residue chain is Isoleucine--tRNA ligase (1080 aa).

The short motif at 48-58 (PYASGSIHLGT) is the 'HIGH' region element. The 'KMSKS' region signature appears at 628 to 632 (KMSKS). Lys-631 is an ATP binding site.

This sequence belongs to the class-I aminoacyl-tRNA synthetase family. IleS type 2 subfamily. As to quaternary structure, monomer. Zn(2+) is required as a cofactor.

The protein localises to the cytoplasm. The enzyme catalyses tRNA(Ile) + L-isoleucine + ATP = L-isoleucyl-tRNA(Ile) + AMP + diphosphate. Functionally, catalyzes the attachment of isoleucine to tRNA(Ile). As IleRS can inadvertently accommodate and process structurally similar amino acids such as valine, to avoid such errors it has two additional distinct tRNA(Ile)-dependent editing activities. One activity is designated as 'pretransfer' editing and involves the hydrolysis of activated Val-AMP. The other activity is designated 'posttransfer' editing and involves deacylation of mischarged Val-tRNA(Ile). This chain is Isoleucine--tRNA ligase, found in Methanopyrus kandleri (strain AV19 / DSM 6324 / JCM 9639 / NBRC 100938).